A 451-amino-acid polypeptide reads, in one-letter code: Secreted RxLR effector protein 111 (451 aa).

The N-terminal stretch at 1–19 is a signal peptide; that stretch reads MRGTLATALLLVASCRIAA. The short motif at 48-69 is the RxLR-dEER element; it reads RFLRDNREQRVALALTAANESR. Residue asparagine 66 is glycosylated (N-linked (GlcNAc...) asparagine). Polar residues-rich tracts occupy residues 175–184 and 413–426; these read RKTLSKTQFK and SPASQSRSNNQRTG. 2 disordered regions span residues 175–194 and 404–451; these read RKTLSKTQFKNPAASKSTKR and IPLQ…NKHA. The span at 437–451 shows a compositional bias: basic and acidic residues; the sequence is PERDSFRHIESNKHA.

This sequence belongs to the RxLR effector family.

It localises to the secreted. Its subcellular location is the host nucleus. Its function is as follows. Secreted effector that acts as an elicitor that induces cell death in host plant cells. The sequence is that of Secreted RxLR effector protein 111 from Plasmopara viticola (Downy mildew of grapevine).